We begin with the raw amino-acid sequence, 363 residues long: tRNA dimethylallyltransferase (363 aa).

65–72 lines the ATP pocket; sequence GPTASGKS. 67 to 72 is a substrate binding site; it reads TASGKS. Interaction with substrate tRNA stretches follow at residues 90–93 and 214–218; these read DSMQ and QRLIR.

This sequence belongs to the IPP transferase family. As to quaternary structure, monomer. It depends on Mg(2+) as a cofactor.

The enzyme catalyses adenosine(37) in tRNA + dimethylallyl diphosphate = N(6)-dimethylallyladenosine(37) in tRNA + diphosphate. Functionally, catalyzes the transfer of a dimethylallyl group onto the adenine at position 37 in tRNAs that read codons beginning with uridine, leading to the formation of N6-(dimethylallyl)adenosine (i(6)A). This Rickettsia massiliae (strain Mtu5) protein is tRNA dimethylallyltransferase.